The sequence spans 461 residues: Transcription factor SOX-10 (461 aa).

Disordered stretches follow at residues methionine 1–aspartate 60, leucine 154–glycine 191, leucine 205–asparagine 268, lysine 350–serine 369, and alanine 433–proline 461. Positions alanine 30–asparagine 42 are enriched in polar residues. A dimerization (DIM) region spans residues glutamate 56–proline 96. A DNA-binding region (HMG box) is located at residues valine 98 to lysine 166. The segment covering leucine 154 to tyrosine 167 has biased composition (basic and acidic residues). Over residues glutamate 181–glycine 191 the composition is skewed to gly residues. The tract at residues proline 221–valine 306 is transactivation domain (TAM). A compositionally biased stretch (basic and acidic residues) spans alanine 247–isoleucine 264. Residues lysine 350–proline 461 form a transactivation domain (TAC) region. Polar residues predominate over residues valine 441–proline 461.

It is found in the cytoplasm. Its subcellular location is the nucleus. In terms of biological role, transcription factor that plays a central role in developing and mature glia. Specifically activates expression of myelin genes, during oligodendrocyte (OL) maturation, thereby playing a central role in oligodendrocyte maturation and CNS myelination. The chain is Transcription factor SOX-10 (SOX10) from Gallus gallus (Chicken).